Reading from the N-terminus, the 121-residue chain is Nitrogen fixation nifHD region glnB-like protein 2 (121 aa).

It belongs to the P(II) protein family.

Its function is as follows. Could be involved in the regulation of nitrogen fixation. This chain is Nitrogen fixation nifHD region glnB-like protein 2 (glnBII), found in Methanococcus maripaludis (Methanococcus deltae).